The chain runs to 214 residues: Ras-related protein Rab2BV (214 aa).

Residue 19–26 (GDSGVGKS) coordinates GTP. The Effector region signature appears at 41–49 (SKSTIGVEF). GTP-binding positions include 67–71 (DTAGQ) and 125–128 (NKSD). S-geranylgeranyl cysteine attachment occurs at residues C211 and C212.

The protein belongs to the small GTPase superfamily. Rab family.

Its subcellular location is the cell membrane. The protein is Ras-related protein Rab2BV (RAB2BV) of Beta vulgaris (Sugar beet).